The chain runs to 233 residues: MCRHLGWLGAQVAVSSLVLDPPQGLRVQSYAPRRQKHGLMNADGWGVGFFDGAIPRRWRSAAPLWGDTSFHSVAPALRSHCILAAVRSATVGMPIEVSATPPFTDGHWLLAHNGVVDRAVLPAGPAAESVCDSAILAATIFAHGLDALGDTIVKVGAADPNARLNILAANGSRLIATTWGDTLSILRRADGVVLASEPYDDDSGWGDVPDRHLVEVTQKGVTLTALDRAKGPR.

Catalysis depends on cysteine 2, which acts as the Nucleophile. The 232-residue stretch at 2-233 folds into the Glutamine amidotransferase type-2 domain; that stretch reads CRHLGWLGAQ…TALDRAKGPR (232 aa).

The enzyme catalyses gamma-L-glutamyl-hercynylcysteine S-oxide + H2O = S-(hercyn-2-yl)-L-cysteine S-oxide + L-glutamate. Its pathway is amino-acid biosynthesis; ergothioneine biosynthesis. In terms of biological role, catalyzes the hydrolysis of the gamma-glutamyl amide bond of hercynyl-gamma-L-glutamyl-L-cysteine sulfoxide to produce hercynylcysteine sulfoxide, a step in the biosynthesis pathway of ergothioneine. ERG is one of the major redox buffers which protects bacteria against redox stressors and antibiotics; loss of ERG or mycothiol (MSH, the other major redox buffer in this bacteria) leads to respiratory alterations and bioenergetic deficiencies that negatively impact virulence. The protein is Gamma-glutamyl-hercynylcysteine sulfoxide hydrolase of Mycobacterium tuberculosis (strain CDC 1551 / Oshkosh).